A 336-amino-acid polypeptide reads, in one-letter code: Uroporphyrinogen decarboxylase (336 aa).

Residues 24–28, Asp-73, Tyr-142, Ser-197, and His-312 contribute to the substrate site; that span reads RQVGR.

Belongs to the uroporphyrinogen decarboxylase family. In terms of assembly, homodimer.

Its subcellular location is the cytoplasm. The enzyme catalyses uroporphyrinogen III + 4 H(+) = coproporphyrinogen III + 4 CO2. Its pathway is porphyrin-containing compound metabolism; protoporphyrin-IX biosynthesis; coproporphyrinogen-III from 5-aminolevulinate: step 4/4. In terms of biological role, catalyzes the decarboxylation of four acetate groups of uroporphyrinogen-III to yield coproporphyrinogen-III. The polypeptide is Uroporphyrinogen decarboxylase (Chlamydia trachomatis serovar L2 (strain ATCC VR-902B / DSM 19102 / 434/Bu)).